Consider the following 199-residue polypeptide: Thymidine kinase (199 aa).

Residues 23–30 (GSMFSGKT) and 95–98 (DEAQ) contribute to the ATP site. Residue E96 is the Proton acceptor of the active site. Residues C152, C155, C184, and C187 each contribute to the Zn(2+) site.

It belongs to the thymidine kinase family. In terms of assembly, homotetramer.

The protein localises to the cytoplasm. It carries out the reaction thymidine + ATP = dTMP + ADP + H(+). The polypeptide is Thymidine kinase (Bacteroides fragilis (strain YCH46)).